A 258-amino-acid polypeptide reads, in one-letter code: uncharacterized protein (258 aa).

Residues Ile-17, Asp-53, Asn-80, Arg-113, Tyr-145, Lys-149, Ile-178, and Ser-180 each coordinate NADP(+). Tyr-145 functions as the Proton donor in the catalytic mechanism. Residue Lys-149 is the Lowers pKa of active site Tyr of the active site.

This sequence belongs to the short-chain dehydrogenases/reductases (SDR) family.

The protein localises to the cytoplasm. Its subcellular location is the nucleus. This is an uncharacterized protein from Schizosaccharomyces pombe (strain 972 / ATCC 24843) (Fission yeast).